Consider the following 156-residue polypeptide: Endogenous retrovirus group K member 25 Pro protein (156 aa).

One can recognise a Peptidase A2 domain in the interval 21-96 (FEGLVDTGAD…IPLNLWGRDL (76 aa)). Residue aspartate 26 is part of the active site. Residues 111–156 (YSPTSQKIMTKMGYIPGKGLGKNEDGIKIPVEAKINQKREGIGYPF) form the G-patch domain.

It belongs to the peptidase A2 family. HERV class-II K(HML-2) subfamily. As to quaternary structure, active as a homodimer. Post-translationally, autoproteolytically processed at the N-terminus. Expected C-terminal autoprocessing not detected. The sequence shown is that of the processed Pro protein.

It carries out the reaction Processing at the authentic HIV-1 PR recognition site and release of the mature p17 matrix and the p24 capsid protein, as a result of the cleavage of the -SQNY-|-PIVQ- cleavage site.. Functionally, retroviral proteases have roles in processing of the primary translation products and the maturation of the viral particle. Endogenous Pro proteins may have kept, lost or modified their original function during evolution. This endogenous protein has retained most of the characteristics of retroviral proteases. This Homo sapiens (Human) protein is Endogenous retrovirus group K member 25 Pro protein (ERVK-25).